We begin with the raw amino-acid sequence, 185 residues long: Ribosome-recycling factor (185 aa).

Belongs to the RRF family.

The protein localises to the cytoplasm. Its function is as follows. Responsible for the release of ribosomes from messenger RNA at the termination of protein biosynthesis. May increase the efficiency of translation by recycling ribosomes from one round of translation to another. The protein is Ribosome-recycling factor of Buchnera aphidicola subsp. Acyrthosiphon pisum (strain Tuc7).